The chain runs to 321 residues: MIKKIAVLTSGGDAPGMNAAIRGVVRSALAEGLEVFGIYDGYQGLYNNKIKQLNRYSVSDVINRGGTFLGSARFPEFKDPNIRAKCAEILRSHGIDALVVIGGDGSYMGAKLLTEEHSFPCVGLPGTIDNDVAGTDYTIGYQTALQTAVDAIDRLRDTSSSHQRISIVEIMGRHCSDLTISAGIAGGCEYIVASEIEFNREELIQQIERSIIRGKRHAIIAITELLTDVHSLAKEIEARVGHETRATVLGHIQRGGSPCAFDRILASRMGAYAVDLLLQGKGGYCVGIQNEQLVHHDIIDAINNMQRVFKADWLKVAKRLE.

Gly12 provides a ligand contact to ATP. Residues 22 to 26 (RGVVR) and 55 to 60 (RYSVSD) each bind ADP. ATP-binding positions include 73–74 (RF) and 103–106 (GDGS). Asp104 is a Mg(2+) binding site. 127–129 (TID) contacts substrate. The active-site Proton acceptor is the Asp129. Position 156 (Arg156) interacts with ADP. Residues Arg164 and 171–173 (MGR) contribute to the substrate site. ADP-binding positions include 187-189 (GCE), Arg213, and 215-217 (KRH). Substrate-binding positions include Glu224, Arg245, and 251 to 254 (HIQR).

This sequence belongs to the phosphofructokinase type A (PFKA) family. ATP-dependent PFK group I subfamily. Prokaryotic clade 'B1' sub-subfamily. Homotetramer. It depends on Mg(2+) as a cofactor.

The protein resides in the cytoplasm. The enzyme catalyses beta-D-fructose 6-phosphate + ATP = beta-D-fructose 1,6-bisphosphate + ADP + H(+). The protein operates within carbohydrate degradation; glycolysis; D-glyceraldehyde 3-phosphate and glycerone phosphate from D-glucose: step 3/4. Its activity is regulated as follows. Allosterically activated by ADP and other diphosphonucleosides, and allosterically inhibited by phosphoenolpyruvate. Functionally, catalyzes the phosphorylation of D-fructose 6-phosphate to fructose 1,6-bisphosphate by ATP, the first committing step of glycolysis. The chain is ATP-dependent 6-phosphofructokinase from Haemophilus influenzae (strain PittEE).